The chain runs to 1879 residues: Protein TIC 214 (1879 aa).

6 helical membrane passes run isoleucine 18–glycine 38, phenylalanine 64–leucine 84, proline 87–proline 107, leucine 124–leucine 144, valine 172–isoleucine 192, and isoleucine 218–proline 238. Disordered regions lie at residues glutamate 245–threonine 305 and isoleucine 586–methionine 702. 2 stretches are compositionally biased toward acidic residues: residues alanine 253 to threonine 268 and glutamate 295 to threonine 305. Residues isoleucine 586 to threonine 688 show a composition bias toward low complexity. Over residues isoleucine 691–proline 701 the composition is skewed to basic and acidic residues.

Belongs to the TIC214 family. Part of the Tic complex.

It is found in the plastid. It localises to the chloroplast inner membrane. In terms of biological role, involved in protein precursor import into chloroplasts. May be part of an intermediate translocation complex acting as a protein-conducting channel at the inner envelope. The polypeptide is Protein TIC 214 (Cucumis sativus (Cucumber)).